The following is a 111-amino-acid chain: Universal stress protein B (111 aa).

2 consecutive transmembrane segments (helical) span residues 1–21 and 90–110; these read MISTVALFWALFLVCVINMAR and FILTSALCGLVIISLIGLMIW.

This sequence belongs to the universal stress protein B family.

It is found in the cell inner membrane. The protein is Universal stress protein B of Cronobacter sakazakii (strain ATCC BAA-894) (Enterobacter sakazakii).